A 207-amino-acid chain; its full sequence is Small ribosomal subunit protein uS4A (207 aa).

The region spanning 98-161 (RRLDNVVYRM…REHKRIKELA (64 aa)) is the S4 RNA-binding domain.

This sequence belongs to the universal ribosomal protein uS4 family. In terms of assembly, part of the 30S ribosomal subunit. Contacts protein S5. The interaction surface between S4 and S5 is involved in control of translational fidelity.

Its function is as follows. One of the primary rRNA binding proteins, it binds directly to 16S rRNA where it nucleates assembly of the body of the 30S subunit. In terms of biological role, with S5 and S12 plays an important role in translational accuracy. This Symbiobacterium thermophilum (strain DSM 24528 / JCM 14929 / IAM 14863 / T) protein is Small ribosomal subunit protein uS4A.